The following is a 275-amino-acid chain: C-type lectin domain family 12 member B (275 aa).

The Cytoplasmic portion of the chain corresponds to 1–41 (MSDEVTYATLMLQDSARVRGNQDGNNLRKEGHPAQSSLWRG). Residues 5-10 (VTYATL) carry the ITIM motif motif. Tyr7 carries the post-translational modification Phosphotyrosine. Residues 42–64 (AALSLMTLCLVLVTGLVTLATMF) traverse the membrane as a helical; Signal-anchor for type II membrane protein segment. The Extracellular segment spans residues 65–275 (LQVSNDINSD…ASLVKTEDLD (211 aa)). Residues Asn91, Asn175, and Asn236 are each glycosylated (N-linked (GlcNAc...) asparagine). The region spanning 149–263 (YGNSCYYFSI…CSAEIPWICE (115 aa)) is the C-type lectin domain. 2 cysteine pairs are disulfide-bonded: Cys171–Cys262 and Cys241–Cys254.

In terms of assembly, homodimer. Interacts (via ITIM motif) with PTPN6. Interacts (via ITIM motif) with PTPN11; this interaction triggers dephosphorylation and activation of PTPN11.

It localises to the cell membrane. Its function is as follows. Inhibitory receptor postulated to negatively regulate immune and non-immune functions. Upon phosphorylation, recruits SH2 domain-containing PTPN6 and PTPN11 phosphatases to its ITIM motif and antagonizes activation signals. Although it inhibits KLRK1/NKG2D-mediated signaling, it does not bind known ligands of KLRK1/NKG2D and therefore is not its inhibitory counterpart. May limit activation of myeloid cell subsets in response to infection or tissue inflammation. May protect target cells against natural killer cell-mediated lysis. May negatively regulate cell cycle and differentiation of melanocytes via inactivation of STAT3. This Mus musculus (Mouse) protein is C-type lectin domain family 12 member B (Clec12b).